The primary structure comprises 475 residues: MSKVVLASQLPNKRNASLAPGLKQRHVTMLSIAGVIGAGLFVGSGHAIAAAGPAALLAYLIAGTLVVLVMRMLGEMAVASPDTGSFSTYADRSIGRWAGFTIGWLYWWFWVLVIPLEAIAAAAILNAWFPAIDTWIFALAVTFLLTVTNLFSVARYGEFEFWFALLKVIAIIAFIVLGAVAIVGGLPEREVSGLSSLMASHGGFVPNGYGAVLGALLTTMFSFMGTEIVTIAAAESKDPAKQITRATNSVIWRIGLFYLVSIFIVISIVPWNDPLLIQVGSYQRALELLDIPHAKLIVDLVVLVAVASCLNSAIYTSSRMVFSLAKRGDAPSVLKLTNTAHVPRPAVLASTAVGFLTTIVNYFAPEKVFTFLLASSGAVALLVYLVIAVAQLRMRKQLQASGQPIEFRMWLYPWLTWAVILFIVAALSIMLIMPEHRHEVFATALLTIFTVCLGLLNARRKPRLGEDYAGKTARV.

The next 12 helical transmembrane spans lie at 27-47, 48-68, 105-125, 127-147, 163-183, 211-231, 250-270, 296-316, 345-365, 368-388, 413-433, and 438-458; these read VTML…SGHA, IAAA…LVVL, LYWW…AAIL, AWFP…LLTV, FALL…VAIV, AVLG…IVTI, VIWR…SIVP, LIVD…AIYT, PAVL…YFAP, VFTF…LVIA, PWLT…MLIM, and HEVF…LLNA.

It belongs to the amino acid-polyamine-organocation (APC) superfamily. Amino acid transporter (AAT) (TC 2.A.3.1) family.

It is found in the membrane. Its function is as follows. Involved in the degradation of beta-alanine. In Pseudomonas aeruginosa (strain ATCC 15692 / DSM 22644 / CIP 104116 / JCM 14847 / LMG 12228 / 1C / PRS 101 / PAO1), this protein is Probable GABA permease (bauD).